The following is a 280-amino-acid chain: Beta-glucosyl-HMC-alpha-glucosyl-transferase (280 aa).

It functions in the pathway genetic information processing; DNA modification. Transfers a gentiobiosyl-group on a hydroxymethylcytosine residue in DNA. Is involved in a DNA modification process to protects the phage genome against its own nucleases and the host restriction endonuclease system. In Enterobacteria phage T6 (Bacteriophage T6), this protein is Beta-glucosyl-HMC-alpha-glucosyl-transferase.